A 235-amino-acid chain; its full sequence is ATP phosphoribosyltransferase (235 aa).

The protein belongs to the ATP phosphoribosyltransferase family. Short subfamily. In terms of assembly, heteromultimer composed of HisG and HisZ subunits.

Its subcellular location is the cytoplasm. The catalysed reaction is 1-(5-phospho-beta-D-ribosyl)-ATP + diphosphate = 5-phospho-alpha-D-ribose 1-diphosphate + ATP. It functions in the pathway amino-acid biosynthesis; L-histidine biosynthesis; L-histidine from 5-phospho-alpha-D-ribose 1-diphosphate: step 1/9. Catalyzes the condensation of ATP and 5-phosphoribose 1-diphosphate to form N'-(5'-phosphoribosyl)-ATP (PR-ATP). Has a crucial role in the pathway because the rate of histidine biosynthesis seems to be controlled primarily by regulation of HisG enzymatic activity. The sequence is that of ATP phosphoribosyltransferase from Synechococcus sp. (strain JA-2-3B'a(2-13)) (Cyanobacteria bacterium Yellowstone B-Prime).